Consider the following 256-residue polypeptide: Protein CC2D2B homolog (256 aa).

The tract at residues 1-24 (MSEEMDNVTAEEITDKHLQKDLDA) is disordered. A compositionally biased stretch (basic and acidic residues) spans 13–22 (ITDKHLQKDL). 2 coiled-coil regions span residues 136–159 (DLLK…KANI) and 194–214 (EIYK…EEGK).

This is Protein CC2D2B homolog from Macaca fascicularis (Crab-eating macaque).